Here is a 349-residue protein sequence, read N- to C-terminus: 2-oxoglutarate-Fe(II) type oxidoreductase ppzD (349 aa).

Residues 200–311 enclose the Fe2OG dioxygenase domain; sequence NTSELRLNHY…RYSVAYFGKP (112 aa). H227, D229, and H287 together coordinate Fe cation. Residue R302 participates in 2-oxoglutarate binding.

Belongs to the iron/ascorbate-dependent oxidoreductase family. Fe(2+) is required as a cofactor.

The catalysed reaction is L-proline + 2-oxoglutarate + O2 = trans-4-hydroxy-L-proline + succinate + CO2. The enzyme catalyses L-proline + 2-oxoglutarate + O2 = trans-3-hydroxy-L-proline + succinate + CO2. It catalyses the reaction D-proline + 2-oxoglutarate + O2 = cis-4-hydroxy-D-proline + succinate + CO2. It functions in the pathway secondary metabolite biosynthesis. 2-oxoglutarate-Fe(II) type oxidoreductase; part of the gene cluster that mediates the biosynthesis of pyrrolopyrazines, secondary metabolites showing insecticidal activity. Within the pathway, ppzD converts L-proline into trans-4-hydroxy-L-proline as a major product, yielding a key precursor for peramine biosynthesis. PpzD is also able to convert L-proline into trans-3-hydroxy-L-proline. The single multifunctional NRPS ppzA is sufficient to produce peramine via condensation of 1-pyrroline-5-carboxylate and arginine, N-methylation of the alpha-amino group of arginine and reduction of the thioester and the cyclization to form an iminium ion resulting in release from the peptide synthetase. Deprotonation of this intermediate and oxidation of the pyrroline ring would give rise to peramine. In Epichloe species that produce only peramine, the peramine synthetase gene is not localized in a gene cluster, in contrast to Metarhizium species that contain additional pyrrolopyrazine biosynthesis genes. The 2-oxoglutarate-Fe(II) type oxidoreductase ppzC hydroxylates peramine to yield the newly identified compound 8-hydroxyperamine whereas ppzD converts L-proline into trans-4-hydroxy-L-proline, a precursor of peramine biosynthesis. The sequence is that of 2-oxoglutarate-Fe(II) type oxidoreductase ppzD (ppzD) from Metarhizium majus (strain ARSEF 297).